A 663-amino-acid chain; its full sequence is Terreic acid cluster-specific transcription factor atF (663 aa).

A compositionally biased stretch (polar residues) spans 1–20 (MFATFNSSMDNRSSANSPVA). Disordered stretches follow at residues 1 to 28 (MFAT…PKRT) and 55 to 126 (TRGV…SPSQ). The segment at residues 34-60 (CDWCRLNRVKCDDGQPCKNCRTRGVRC) is a DNA-binding region (zn(2)-C6 fungal-type). The segment covering 55–64 (TRGVRCRKGS) has biased composition (basic residues). Low complexity-rich tracts occupy residues 73-88 (SSSA…QGAQ) and 105-125 (ATTS…PSPS).

The protein localises to the nucleus. In terms of biological role, transcription factor that regulates the expression of the gene cluster that mediates the biosynthesis of terreic acid, a quinone epoxide inhibitor of Bruton's tyrosine kinase. The protein is Terreic acid cluster-specific transcription factor atF of Aspergillus terreus (strain NIH 2624 / FGSC A1156).